The sequence spans 338 residues: Large ribosomal subunit protein uL3 (338 aa).

The span at 228–237 shows a compositional bias: basic residues; sequence HKHRKGHRRT. The disordered stretch occupies residues 228-255; sequence HKHRKGHRRTGTIGPQAPALMFTQPRPG.

This sequence belongs to the universal ribosomal protein uL3 family. In terms of assembly, part of the 50S ribosomal subunit. Forms a cluster with proteins L14 and L24e.

Its function is as follows. One of the primary rRNA binding proteins, it binds directly near the 3'-end of the 23S rRNA, where it nucleates assembly of the 50S subunit. The sequence is that of Large ribosomal subunit protein uL3 from Pyrobaculum calidifontis (strain DSM 21063 / JCM 11548 / VA1).